Here is a 321-residue protein sequence, read N- to C-terminus: Phospho-N-acetylmuramoyl-pentapeptide-transferase (321 aa).

10 consecutive transmembrane segments (helical) span residues 1-21 (MIFV…PVLI), 50-70 (MGGL…IIFV), 76-96 (IILL…DDYI), 112-132 (FLAQ…FHLV), 140-160 (IPFT…IVFW), 176-196 (GLAT…SFVL), 200-220 (AIGI…PYNI), 225-245 (VFMG…ISIM), 250-270 (LSLI…MLQV), and 300-320 (VVTV…WIGV).

This sequence belongs to the glycosyltransferase 4 family. MraY subfamily. Mg(2+) serves as cofactor.

Its subcellular location is the cell membrane. It catalyses the reaction UDP-N-acetyl-alpha-D-muramoyl-L-alanyl-gamma-D-glutamyl-L-lysyl-D-alanyl-D-alanine + di-trans,octa-cis-undecaprenyl phosphate = Mur2Ac(oyl-L-Ala-gamma-D-Glu-L-Lys-D-Ala-D-Ala)-di-trans,octa-cis-undecaprenyl diphosphate + UMP. The protein operates within cell wall biogenesis; peptidoglycan biosynthesis. Functionally, catalyzes the initial step of the lipid cycle reactions in the biosynthesis of the cell wall peptidoglycan: transfers peptidoglycan precursor phospho-MurNAc-pentapeptide from UDP-MurNAc-pentapeptide onto the lipid carrier undecaprenyl phosphate, yielding undecaprenyl-pyrophosphoryl-MurNAc-pentapeptide, known as lipid I. This Staphylococcus aureus (strain MSSA476) protein is Phospho-N-acetylmuramoyl-pentapeptide-transferase.